The primary structure comprises 185 residues: Ribosome-recycling factor (185 aa).

Belongs to the RRF family.

Its subcellular location is the cytoplasm. Functionally, responsible for the release of ribosomes from messenger RNA at the termination of protein biosynthesis. May increase the efficiency of translation by recycling ribosomes from one round of translation to another. This Streptococcus pneumoniae (strain P1031) protein is Ribosome-recycling factor.